The primary structure comprises 485 residues: D-alanine--D-alanyl carrier protein ligase (485 aa).

144 to 145 is an ATP binding site; that stretch reads TS. D189 provides a ligand contact to D-alanine. 284-289 is an ATP binding site; sequence NTYGPT. V293 lines the D-alanine pocket. 2 residues coordinate ATP: D365 and K473. Residue K473 coordinates D-alanine.

Belongs to the ATP-dependent AMP-binding enzyme family. DltA subfamily.

It localises to the cytoplasm. The enzyme catalyses holo-[D-alanyl-carrier protein] + D-alanine + ATP = D-alanyl-[D-alanyl-carrier protein] + AMP + diphosphate. Its pathway is cell wall biogenesis; lipoteichoic acid biosynthesis. In terms of biological role, catalyzes the first step in the D-alanylation of lipoteichoic acid (LTA), the activation of D-alanine and its transfer onto the D-alanyl carrier protein (Dcp) DltC. In an ATP-dependent two-step reaction, forms a high energy D-alanyl-AMP intermediate, followed by transfer of the D-alanyl residue as a thiol ester to the phosphopantheinyl prosthetic group of the Dcp. D-alanylation of LTA plays an important role in modulating the properties of the cell wall in Gram-positive bacteria, influencing the net charge of the cell wall. The sequence is that of D-alanine--D-alanyl carrier protein ligase from Staphylococcus aureus (strain MRSA252).